A 498-amino-acid chain; its full sequence is Hexokinase-1 (498 aa).

The helical transmembrane segment at 4-24 (VTVGAAVVGAAAVCAVAALIV) threads the bilayer. The Hexokinase domain occupies 35–488 (GRAMAILREF…SGIGAALLRA (454 aa)). The interval 89–228 (QLVMKLGVFY…VLDMRVSALV (140 aa)) is hexokinase small subdomain. The ADP site is built by Gly104, Thr105, and Asn106. 4 residues coordinate D-glucose: Thr194, Lys195, Asn229, and Asp230. The interval 229 to 477 (NDTVGTLAGG…TSIVFVHSND (249 aa)) is hexokinase large subdomain. Thr253 lines the ADP pocket. Asn256, Glu284, and Glu315 together coordinate D-glucose. Gly442 is an ADP binding site.

Belongs to the hexokinase family. Expressed in young and mature leaves, stems, roots, stolons, and developing and mature tubers.

It localises to the plastid. It is found in the chloroplast outer membrane. The enzyme catalyses a D-hexose + ATP = a D-hexose 6-phosphate + ADP + H(+). It carries out the reaction D-fructose + ATP = D-fructose 6-phosphate + ADP + H(+). The catalysed reaction is D-glucose + ATP = D-glucose 6-phosphate + ADP + H(+). The protein operates within carbohydrate metabolism; hexose metabolism. Its pathway is carbohydrate degradation; glycolysis; D-glyceraldehyde 3-phosphate and glycerone phosphate from D-glucose: step 1/4. In terms of biological role, fructose and glucose phosphorylating enzyme. May be involved in the phosphorylation of glucose during the export from plastids to cytosol. Seems neither to be involved in cell sugar sensing nor in carbohydrate metabolism in tuber. This chain is Hexokinase-1 (HXK1), found in Solanum tuberosum (Potato).